The primary structure comprises 1372 residues: Cell fusion protein fus1 (1372 aa).

The region spanning 104–522 (LCPDDPNLVN…EQGNNAPGYS (419 aa)) is the GBD/FH3 domain. Positions 802-817 (PFKAPPPAPLPPPAPP) match the SH3-binding motif. Positions 868-1278 (PGELCNPSKR…AFLRLQALKA (411 aa)) constitute an FH2 domain.

It belongs to the formin homology family. BNI1 subfamily. As to quaternary structure, interacts with actin at the FH2 domain.

It is found in the cytoplasm. Its function is as follows. Required for cell fusion. It associates with the pre-zygotic projection tips in conjugating cells. This chain is Cell fusion protein fus1 (fus1), found in Schizosaccharomyces pombe (strain 972 / ATCC 24843) (Fission yeast).